Reading from the N-terminus, the 288-residue chain is Prohibitin-2 (288 aa).

Residues 21–43 (GKYAFTGTGLLLALGLAGFAVQT) form a helical; Signal-anchor for type II membrane protein membrane-spanning segment. An AIM motif is present at residues 125-128 (YRTL).

Belongs to the prohibitin family. In terms of assembly, the mitochondrial prohibitin complex consists of two subunits (phb1 and phb2). The subunits assemble into a membrane-associated ring-shaped supercomplex of approximately 1 mDa.

The protein resides in the mitochondrion inner membrane. Prohibitin probably acts as a holdase/unfoldase for the stabilization of newly synthesized mitochondrial proteins. Involved in mitophagy; may act as an adapter for atg8 that supports mitophagosome assembly. Negatively regulates the proteolytic processing of atg32 via the i-AAA protease. Acts as a negative regulator of the m-AAA protease. This is Prohibitin-2 (phb2) from Schizosaccharomyces pombe (strain 972 / ATCC 24843) (Fission yeast).